Consider the following 368-residue polypeptide: Single-stranded DNA-binding protein 3 (368 aa).

The LisH domain occupies 16–48; the sequence is AREKLALYVYEYLLHVGAQKSAQTFLSEIRWEK. The tract at residues 100 to 368 is disordered; it reads PVLGNIPPND…NYSPSMTMSV (269 aa). Residues 126–139 are compositionally biased toward pro residues; the sequence is GSQPSPHAQPPPHN. Low complexity-rich tracts occupy residues 174–189, 211–220, and 230–248; these read PNMGGPMQRMNPPRGM, GPGMPGINMG, and PSSANSIPYSSSSPGTYVG. Pro residues predominate over residues 252–262; it reads GGGPPGTPIMP. Over residues 265-276 the composition is skewed to polar residues; it reads ADSTNSSDNIYT. The segment covering 295–305 has biased composition (gly residues); sequence GSDGPMGGMGG. A compositionally biased stretch (low complexity) spans 326–337; the sequence is NSPNNISGISNP. A compositionally biased stretch (polar residues) spans 353-368; that stretch reads HSFQNDNYSPSMTMSV.

Expressed in embryonic fibroblasts and chondrocytes.

The protein localises to the nucleus. Its function is as follows. May be involved in transcription regulation of the alpha 2(I) collagen gene where it binds to the single-stranded polypyrimidine sequences in the promoter region. The chain is Single-stranded DNA-binding protein 3 (SSBP3) from Gallus gallus (Chicken).